A 115-amino-acid chain; its full sequence is Con-Ins G1c (115 aa).

An N-terminal signal peptide occupies residues 1 to 24; that stretch reads MTTSFYFLLMALGLLLYVCQSSFG. Positions 25-29 are excised as a propeptide; that stretch reads NQHTR. Pro-34 is modified (4-hydroxyproline; partial). Disulfide bonds link Cys-38–Cys-101, Cys-50–Cys-114, and Cys-100–Cys-105. Glu-41 is subject to 4-carboxyglutamate. Residues 53–94 constitute a propeptide, c peptide; it reads KRNDAGKKRGRASPLWQRRGSLSQLKARAKRNGAFHLPRDGR. A 4-carboxyglutamate modification is found at Glu-98. Pro-104 carries the post-translational modification 4-hydroxyproline; partial. At Glu-109 the chain carries 4-carboxyglutamate; partial.

This sequence belongs to the insulin family. Heterodimer of A and B chains; disulfide-linked. In terms of processing, is different from Con-Ins G1a (AC A0A0B5AC95) due to absence of amidation at Cys-114. As to expression, expressed by the venom gland.

It localises to the secreted. In terms of biological role, this venom insulin, from a fish-hunting cone snail, facilitates prey capture by rapidly inducing hypoglycemic shock. It is one of the smallest known insulin found in nature and lacks the C-terminal segment of the B chain that, in human insulin, mediates engagement of the insulin receptor (INSR) and assembly of the hormone's hexameric storage form. Despite lacking this segment, it both binds and activates human insulin receptor (long isoform (HIR-B)) with only a 10-fold lower potency. In vivo, intraperitoneal injection of this peptide into zebrafish lowers blood glucose with the same potency than human insulin. In addition, when applied to water, this peptide reduces overall locomotor activity of zebrafish larvae, observed as a significant decrease in the percentage of time spent swimming and movement frequency. In Conus geographus (Geography cone), this protein is Con-Ins G1c.